We begin with the raw amino-acid sequence, 329 residues long: Olfactory receptor 52L1 (329 aa).

Over 1–43 (MTLVSFFSFLSKPLIMLLSNSSWRLSQPSFLLVGIPGLEESQH) the chain is Extracellular. Residue Asn20 is glycosylated (N-linked (GlcNAc...) asparagine). The chain crosses the membrane as a helical span at residues 44–64 (WIALPLGILYLLALVGNVTIL). The Cytoplasmic segment spans residues 65 to 72 (FIIWMDPS). The helical transmembrane segment at 73–93 (LHQSMYLFLSMLAAIDLVLAS) threads the bilayer. The Extracellular segment spans residues 94–117 (STAPKALAVLLVHAHEIGYIVCLI). An intrachain disulfide couples Cys115 to Cys207. The helical transmembrane segment at 118 to 138 (QMFFIHAFSSMESGVLVAMAL) threads the bilayer. Residues 139–157 (DRYVAICHPLHHSTILHPG) are Cytoplasmic-facing. A helical membrane pass occupies residues 158 to 178 (VIGRIGMVVLVRGLLLLIPFP). Residues 179–214 (ILLGTLIFCQATIIGHAYCEHMAVVKLACSETTVNR) are Extracellular-facing. Residues 215-235 (AYGLTMALLVIGLDVLAIGVS) traverse the membrane as a helical segment. The Cytoplasmic segment spans residues 236–255 (YAHILQAVLKVPGSEARLKA). The chain crosses the membrane as a helical span at residues 256-276 (FSTCGSHICVILVFYVPGIFS). Topologically, residues 277–291 (FLTHRFGHHVPHHVH) are extracellular. A helical membrane pass occupies residues 292-312 (VLLATRYLLMPPALNPLVYGV). At 313–329 (KTQQIRQRVLRVFTQKD) the chain is on the cytoplasmic side.

The protein belongs to the G-protein coupled receptor 1 family.

It localises to the cell membrane. Its function is as follows. Odorant receptor. The sequence is that of Olfactory receptor 52L1 (OR52L1) from Homo sapiens (Human).